Reading from the N-terminus, the 554-residue chain is Arginine--tRNA ligase (554 aa).

The 'HIGH' region motif lies at 132–142; sequence ANPTGPLHIGH.

This sequence belongs to the class-I aminoacyl-tRNA synthetase family. In terms of assembly, monomer.

It is found in the cytoplasm. The enzyme catalyses tRNA(Arg) + L-arginine + ATP = L-arginyl-tRNA(Arg) + AMP + diphosphate. The protein is Arginine--tRNA ligase of Pseudarthrobacter chlorophenolicus (strain ATCC 700700 / DSM 12829 / CIP 107037 / JCM 12360 / KCTC 9906 / NCIMB 13794 / A6) (Arthrobacter chlorophenolicus).